A 187-amino-acid polypeptide reads, in one-letter code: Protein GrpE (187 aa).

Positions 1–26 (MHDPKESLETNIQETESQEKLPETPI) are disordered.

The protein belongs to the GrpE family. Homodimer.

Its subcellular location is the cytoplasm. Its function is as follows. Participates actively in the response to hyperosmotic and heat shock by preventing the aggregation of stress-denatured proteins, in association with DnaK and GrpE. It is the nucleotide exchange factor for DnaK and may function as a thermosensor. Unfolded proteins bind initially to DnaJ; upon interaction with the DnaJ-bound protein, DnaK hydrolyzes its bound ATP, resulting in the formation of a stable complex. GrpE releases ADP from DnaK; ATP binding to DnaK triggers the release of the substrate protein, thus completing the reaction cycle. Several rounds of ATP-dependent interactions between DnaJ, DnaK and GrpE are required for fully efficient folding. The polypeptide is Protein GrpE (Dichelobacter nodosus (strain VCS1703A)).